The following is a 354-amino-acid chain: Protein Wnt-11 (354 aa).

An N-terminal signal peptide occupies residues 1–24 (MKPSPQFLLAAFLSLILQTGICYG). 2 N-linked (GlcNAc...) asparagine glycosylation sites follow: Asn-40 and Asn-90. Cystine bridges form between Cys-80–Cys-91, Cys-130–Cys-138, Cys-140–Cys-157, Cys-209–Cys-223, Cys-211–Cys-218, Cys-283–Cys-314, Cys-299–Cys-309, Cys-313–Cys-353, Cys-329–Cys-344, Cys-331–Cys-341, and Cys-336–Cys-337. Residue Ser-215 is the site of O-palmitoleoyl serine; by PORCN attachment. Residues Asn-300 and Asn-304 are each glycosylated (N-linked (GlcNAc...) asparagine).

The protein belongs to the Wnt family. In terms of processing, palmitoleoylation is required for efficient binding to frizzled receptors. Depalmitoleoylation leads to Wnt signaling pathway inhibition.

It localises to the secreted. It is found in the extracellular space. Its subcellular location is the extracellular matrix. Ligand for members of the frizzled family of seven transmembrane receptors. May play a role in the formation of dermal structure, both limb and feather buds. Is likely to signal over only few cell diameters. This chain is Protein Wnt-11 (WNT11), found in Coturnix japonica (Japanese quail).